Consider the following 348-residue polypeptide: Heat-inducible transcription repressor HrcA (348 aa).

This sequence belongs to the HrcA family.

Functionally, negative regulator of class I heat shock genes (grpE-dnaK-dnaJ and groELS operons). Prevents heat-shock induction of these operons. In Pelotomaculum thermopropionicum (strain DSM 13744 / JCM 10971 / SI), this protein is Heat-inducible transcription repressor HrcA.